The following is a 208-amino-acid chain: Thymidylate kinase (208 aa).

Residue 10 to 17 coordinates ATP; it reads GIDGSGKT.

The protein belongs to the thymidylate kinase family.

It carries out the reaction dTMP + ATP = dTDP + ADP. Phosphorylation of dTMP to form dTDP in both de novo and salvage pathways of dTTP synthesis. The chain is Thymidylate kinase from Ligilactobacillus salivarius (strain UCC118) (Lactobacillus salivarius).